A 165-amino-acid polypeptide reads, in one-letter code: uncharacterized protein (165 aa).

The tract at residues 53–123 (CSEKTGSAPN…PAPSSGRQGG (71 aa)) is disordered. The span at 58-71 (GSAPNPGSSAPAPA) shows a compositional bias: low complexity.

This is an uncharacterized protein from Treponema pallidum (strain Nichols).